Consider the following 283-residue polypeptide: Bifunctional protein FolD (283 aa).

166–168 (GAS) serves as a coordination point for NADP(+).

This sequence belongs to the tetrahydrofolate dehydrogenase/cyclohydrolase family. Homodimer.

The enzyme catalyses (6R)-5,10-methylene-5,6,7,8-tetrahydrofolate + NADP(+) = (6R)-5,10-methenyltetrahydrofolate + NADPH. The catalysed reaction is (6R)-5,10-methenyltetrahydrofolate + H2O = (6R)-10-formyltetrahydrofolate + H(+). It functions in the pathway one-carbon metabolism; tetrahydrofolate interconversion. Functionally, catalyzes the oxidation of 5,10-methylenetetrahydrofolate to 5,10-methenyltetrahydrofolate and then the hydrolysis of 5,10-methenyltetrahydrofolate to 10-formyltetrahydrofolate. The protein is Bifunctional protein FolD of Coxiella burnetii (strain CbuK_Q154) (Coxiella burnetii (strain Q154)).